We begin with the raw amino-acid sequence, 372 residues long: Lipoyl synthase, mitochondrial (372 aa).

A mitochondrion-targeting transit peptide spans 1 to 27 (MSLRCGGAVRTVGPRVFGRYVFSPVRE). [4Fe-4S] cluster-binding residues include Cys-106, Cys-111, Cys-117, Cys-137, Cys-141, Cys-144, and Ser-352. The 220-residue stretch at 122–341 (EYATATATIM…EKVGNELGFH (220 aa)) folds into the Radical SAM core domain.

It belongs to the radical SAM superfamily. Lipoyl synthase family. The cofactor is [4Fe-4S] cluster.

It is found in the mitochondrion. The catalysed reaction is [[Fe-S] cluster scaffold protein carrying a second [4Fe-4S](2+) cluster] + N(6)-octanoyl-L-lysyl-[protein] + 2 oxidized [2Fe-2S]-[ferredoxin] + 2 S-adenosyl-L-methionine + 4 H(+) = [[Fe-S] cluster scaffold protein] + N(6)-[(R)-dihydrolipoyl]-L-lysyl-[protein] + 4 Fe(3+) + 2 hydrogen sulfide + 2 5'-deoxyadenosine + 2 L-methionine + 2 reduced [2Fe-2S]-[ferredoxin]. It functions in the pathway protein modification; protein lipoylation via endogenous pathway; protein N(6)-(lipoyl)lysine from octanoyl-[acyl-carrier-protein]: step 2/2. In terms of biological role, catalyzes the radical-mediated insertion of two sulfur atoms into the C-6 and C-8 positions of the octanoyl moiety bound to the lipoyl domains of lipoate-dependent enzymes, thereby converting the octanoylated domains into lipoylated derivatives. In Bos taurus (Bovine), this protein is Lipoyl synthase, mitochondrial.